We begin with the raw amino-acid sequence, 287 residues long: Anthocyanidin 3-O-glucosyltransferase 7 (287 aa).

Residues Ala-162, Gln-164, His-179, Trp-182, Asn-183, Ser-184, and Glu-187 each contribute to the UDP-alpha-D-glucose site. Gly-202 serves as a coordination point for an anthocyanidin. Asp-203 and Gln-204 together coordinate UDP-alpha-D-glucose.

This sequence belongs to the UDP-glycosyltransferase family. As to expression, expressed in cotyledons, hypocotyls, roots and leaves.

It carries out the reaction an anthocyanidin + UDP-alpha-D-glucose + H(+) = an anthocyanidin 3-O-beta-D-glucoside + UDP. The protein operates within pigment biosynthesis; anthocyanin biosynthesis. In terms of biological role, in the presence of other necessary color factors, this glycosylation reaction allows the accumulation of anthocyanin pigments. The polypeptide is Anthocyanidin 3-O-glucosyltransferase 7 (GT7) (Manihot esculenta (Cassava)).